Reading from the N-terminus, the 123-residue chain is Large ribosomal subunit protein bL21 (123 aa).

This sequence belongs to the bacterial ribosomal protein bL21 family. In terms of assembly, part of the 50S ribosomal subunit. Contacts protein L20.

In terms of biological role, this protein binds to 23S rRNA in the presence of protein L20. This chain is Large ribosomal subunit protein bL21, found in Rippkaea orientalis (strain PCC 8801 / RF-1) (Cyanothece sp. (strain PCC 8801)).